Reading from the N-terminus, the 876-residue chain is Importin subunit beta-1 (876 aa).

N-acetylmethionine is present on Met-1. HEAT repeat units follow at residues Leu-3–Ala-29, Asn-32–Lys-62, Ala-85–Glu-120, Leu-129–Asp-160, and Ser-170–Ser-201. Ser-12 bears the Phosphoserine mark. The Importin N-terminal domain maps to Ala-21–Thr-101. The residue at position 211 (Lys-211) is an N6-acetyllysine. HEAT repeat units lie at residues Glu-212–Leu-247, Leu-260–Glu-302, Tyr-314–Cys-359, Ile-363–Ser-392, Pro-399–Leu-438, Leu-449–Ala-485, Ser-500–Lys-537, Tyr-544–Leu-592, His-597–Leu-639, Leu-644–Ala-680, Leu-686–Ile-724, Lys-729–Lys-777, Pro-785–Ala-828, and Leu-834–Gln-875. Residues Val-286–Ala-462 form an essential for high affinity interaction with RPL23A region. An IAB-binding region spans residues Thr-329 to Trp-342. The ran-GTP binding stretch occupies residues Asp-334–Asp-419. An N6-acetyllysine mark is found at Lys-835 and Lys-867.

It belongs to the importin beta family. Importin beta-1 subfamily. In terms of assembly, forms a complex with an importin alpha subunit. Interacts with XPO1. Forms a heterodimer with IPO7. The KPNB1/IPO7 heterodimer interacts with H1 histone. Interacts with SNUPN. Interacts with H2A, H2B, H3 and H4 histones. Component of an import snRNP complex composed of KPNB1, SNUPN, SMN1 and ZNF259. Component of a nuclear export receptor complex composed of KPNB1, Ran, SNUPN and XPO1. Interacts with SRY. Interacts with PRKCI/atypical protein kinase C iota. Interacts with KPNA2. Interacts with KPNA7. Interacts with SNAI1 (via zinc fingers) and SNAI2 (via zinc fingers). Interacts with SLC35G1 and STIM1. Interacts with DCAF8. Interacts with RAN. Interacts with NUMA1 (via C-terminus); this interaction is inhibited by RanGTP. Interacts with ZBED1/hDREF; required for nuclear import of ZBED1/hDREF. Interacts with SRP19. Interacts with RPL23A (via BIB domain), RPS7 and RPL5. In terms of processing, mono-ADP-ribosylated by PARP16.

It is found in the cytoplasm. The protein resides in the nucleus envelope. Functionally, functions in nuclear protein import, either in association with an adapter protein, like an importin-alpha subunit, which binds to nuclear localization signals (NLS) in cargo substrates, or by acting as autonomous nuclear transport receptor. Acting autonomously, serves itself as NLS receptor. Docking of the importin/substrate complex to the nuclear pore complex (NPC) is mediated by KPNB1 through binding to nucleoporin FxFG repeats and the complex is subsequently translocated through the pore by an energy requiring, Ran-dependent mechanism. At the nucleoplasmic side of the NPC, Ran binds to importin-beta and the three components separate and importin-alpha and -beta are re-exported from the nucleus to the cytoplasm where GTP hydrolysis releases Ran from importin. The directionality of nuclear import is thought to be conferred by an asymmetric distribution of the GTP- and GDP-bound forms of Ran between the cytoplasm and nucleus. Mediates autonomously the nuclear import of ribosomal proteins RPL23A, RPS7 and RPL5. In association with IPO7, mediates the nuclear import of H1 histone. In vitro, mediates nuclear import of H2A, H2B, H3 and H4 histones. Imports MRTFA, SNAI1 and PRKCI into the nucleus. This Mus musculus (Mouse) protein is Importin subunit beta-1 (Kpnb1).